Here is a 459-residue protein sequence, read N- to C-terminus: Sperm-tail PG-rich repeat-containing protein 2 (459 aa).

STPGR repeat units lie at residues 21-30 (VGPGSYQVPF), 63-73 (PGPGHYNVSEA), 119-148 (TLGP…NSSG), 157-203 (GPGP…QEKK), 213-243 (TPAP…FGQS), 257-268 (PGPGFYNVLNNT), 351-377 (PAPG…PRSL), 400-410 (GPGPAAYNPVL), and 433-443 (TPGPATYEISQ).

In Homo sapiens (Human), this protein is Sperm-tail PG-rich repeat-containing protein 2 (STPG2).